We begin with the raw amino-acid sequence, 398 residues long: Peptidyl-prolyl cis-trans isomerase D (398 aa).

The PPIase cyclophilin-type domain occupies 21-185 (FGSSPASRPG…EDVKIVDCGE (165 aa)). TPR repeat units lie at residues 229-262 (GLAL…LQLH), 282-323 (TSIQ…PSTE), and 335-368 (AKAF…APED).

The protein belongs to the cyclophilin-type PPIase family. PPIase D subfamily.

The protein resides in the cytoplasm. It catalyses the reaction [protein]-peptidylproline (omega=180) = [protein]-peptidylproline (omega=0). Functionally, PPIases accelerate the folding of proteins. It catalyzes the cis-trans isomerization of proline imidic peptide bonds in oligopeptides. The chain is Peptidyl-prolyl cis-trans isomerase D (CPR6) from Mycosarcoma maydis (Corn smut fungus).